Reading from the N-terminus, the 574-residue chain is MELLIHRSSAIFLTLAVNALYLTSSQNITEEFYQSTCSAVSRGYFSALRTGWYTSVITIELSNIKETKCNGTDTKVKLIKQELDKYKNAVTELQLLMQNTPAANNRARREAPQYMNYTINTTKNLNVSISKKRKRRFLGFLLGVGSAIASGIAVSKVLHLEGEVNKIKNALLSTNKAVVSLSNGVSVLTSKVLDLKNYINNRLLPIVNQQSCRISNIETVIEFQQMNSRLLEITREFSVNAGVTTPLSTYMLTNSELLSLINDMPITNDQKKLMSSNVQIVRQQSYSIMSIIKEEVLAYVVQLPIYGVIDTPCWKLHTSPLCTTNIKEGSNICLTRTDRGWYCDNAGSVSFFPQADTCKVQSNRVFCDTMNSLTLPSEVSLCNTDIFNSKYDCKIMTSKTDISSSVITSLGAIVSCYGKTKCTASNKNRGIIKTFSNGCDYVSNKGVDTVSVGNTLYYVNKLEGKNLYVKGEPIINYYDPLVFPSDEFDASISQVNEKINQSLAFIRRSDELLHNVNTGKSTTNIMITTIIIVIIVVLLSLIAIGLLLYCKAKNTPVTLSKDQLSGINNIAFSK.

Residues 1 to 25 form the signal peptide; sequence MELLIHRSSAIFLTLAVNALYLTSS. Over 26–524 the chain is Extracellular; that stretch reads QNITEEFYQS…NVNTGKSTTN (499 aa). Residues N27 and N70 are each glycosylated (N-linked (GlcNAc...) asparagine; by host). Disulfide bonds link C37–C439, C69–C212, C313–C343, C322–C333, C358–C367, C382–C393, and C416–C422. Residues 76 to 96 adopt a coiled-coil conformation; sequence VKLIKQELDKYKNAVTELQLL. N116, N120, and N126 each carry an N-linked (GlcNAc...) asparagine; by host glycan. Residues 137–157 form a fusion peptide region; sequence FLGFLLGVGSAIASGIAVSKV. The stretch at 158 to 209 forms a coiled coil; it reads LHLEGEVNKIKNALLSTNKAVVSLSNGVSVLTSKVLDLKNYINNRLLPIVNQ. Positions 481 to 516 form a coiled coil; sequence LVFPSDEFDASISQVNEKINQSLAFIRRSDELLHNV. An N-linked (GlcNAc...) asparagine; by host glycan is attached at N500. A helical membrane pass occupies residues 525–550; that stretch reads IMITTIIIVIIVVLLSLIAIGLLLYC. The S-palmitoyl cysteine; by host moiety is linked to residue C550. At 551-574 the chain is on the cytoplasmic side; it reads KAKNTPVTLSKDQLSGINNIAFSK.

The protein belongs to the paramyxoviruses fusion glycoprotein family. Homotrimer. Heterodimer with fusion protein F2; disulfide-linked. Interacts with host NCL; this interaction plays a role in viral entry into the host cell. As a heterodimer with F2, interacts with host heparan sulfate. As a heterodimer with F2, interacts with host IGF1R; this interaction activates PRKCZ/PKCzeta that recruits NCL/nucleolin from the host nucleus to the plasma membrane. Part of a complex composed of F1, F2 and G glycoproteins. As a heterodimer with F2, interacts with host RHOA; this interaction facilitates virus-induced syncytium formation. In terms of assembly, homotrimer. Heterodimer with fusion protein F1; disulfide-linked. As a heterodimer with F1, interacts with host heparan sulfate. As a heterodimer with F1, interacts with host IGF1R; this interaction activates PRKCZ/PKCzeta that recruits NCL/nucleolin from the host nucleus to the plasma membrane. Part of a complex composed of F1, F2 and G glycoproteins. As a heterodimer with F1, interacts with host RHOA; this interaction facilitates virus-induced syncytium formation. The F glycoprotein is synthesized as a F0 inactive precursor that is heavily N-glycosylated and processed at two sites by a host furin-like protease probably in the Golgi. The cleavage site between p27 and F1 may occur after endocytosis to yield the mature F1 and F2 proteins. Both cleavages are required for membrane fusion and p27 is released from the processed protein.

Its subcellular location is the host Golgi apparatus membrane. The protein localises to the virion membrane. It localises to the host cell membrane. Its function is as follows. Inactive precursor that is cleaved at two sites by a furin-like protease to give rise to the mature F1 and F2 fusion glycoproteins. In terms of biological role, class I viral fusion protein. Under the current model, the protein has at least 3 conformational states: pre-fusion native state, pre-hairpin intermediate state, and post-fusion hairpin state. During viral and plasma cell membrane fusion, the coiled coil regions assume a trimer-of-hairpins structure, positioning the fusion peptide in close proximity to the C-terminal region of the ectodomain. The formation of this structure appears to drive apposition and subsequent fusion of viral and cellular membranes leading to delivery of the nucleocapsid into the cytoplasm. This fusion is pH independent and occurs at the plasma or endosomal membrane. The trimer of F1-F2 (F protein) also facilitates the attachment to host cell by binding to host heparan sulfate. F protein is involved in the entry into the host cell through the interaction with host IGF1R. This interaction activates PRKCZ/PKCzeta that recruits host NCL/nucleolin to the apical cell surface where it can bind fusion glycoprotein F1. Later in infection, F protein expressed at the plasma membrane of infected cells can mediate fusion with adjacent cells to form syncytia, a cytopathic effect that could lead to tissue necrosis. F protein may trigger p53-dependent apoptosis. Functionally, major determinant of the species specificity of RSV infection. The trimer of F1-F2 (F protein) also facilitates the attachment to host cell by binding to host heparan sulfate. F protein is involved in the entry into the host cell through the interaction with host IGF1R. This interaction activates PRKCZ/PKCzeta that recruits host NCL/nucleolin to the apical cell surface where it can bind fusion glycoprotein F1. Later in infection, F protein expressed at the plasma membrane of infected cells can mediate fusion with adjacent cells to form syncytia, a cytopathic effect that could lead to tissue necrosis. F protein seems to trigger p53-dependent apoptosis. The polypeptide is Fusion glycoprotein F0 (F) (Homo sapiens (Human)).